A 79-amino-acid chain; its full sequence is ATP synthase subunit c (79 aa).

A run of 2 helical transmembrane segments spans residues 11 to 31 (IAVA…IGIL) and 53 to 73 (FFVV…LGLY).

It belongs to the ATPase C chain family. F-type ATPases have 2 components, F(1) - the catalytic core - and F(0) - the membrane proton channel. F(1) has five subunits: alpha(3), beta(3), gamma(1), delta(1), epsilon(1). F(0) has three main subunits: a(1), b(2) and c(10-14). The alpha and beta chains form an alternating ring which encloses part of the gamma chain. F(1) is attached to F(0) by a central stalk formed by the gamma and epsilon chains, while a peripheral stalk is formed by the delta and b chains.

The protein resides in the cell membrane. F(1)F(0) ATP synthase produces ATP from ADP in the presence of a proton or sodium gradient. F-type ATPases consist of two structural domains, F(1) containing the extramembraneous catalytic core and F(0) containing the membrane proton channel, linked together by a central stalk and a peripheral stalk. During catalysis, ATP synthesis in the catalytic domain of F(1) is coupled via a rotary mechanism of the central stalk subunits to proton translocation. In terms of biological role, key component of the F(0) channel; it plays a direct role in translocation across the membrane. A homomeric c-ring of between 10-14 subunits forms the central stalk rotor element with the F(1) delta and epsilon subunits. The chain is ATP synthase subunit c from Buchnera aphidicola subsp. Acyrthosiphon pisum (strain 5A).